The primary structure comprises 701 residues: Vacuolar protein sorting-associated protein 52 B (701 aa).

Coiled coils occupy residues Phe23–Glu45 and Gln511–Leu533.

It belongs to the VPS52 family. Component of the Golgi-associated retrograde protein (GARP) complex. Detected in pollen.

The protein localises to the golgi apparatus. It is found in the trans-Golgi network membrane. It localises to the endosome membrane. The protein resides in the golgi apparatus membrane. May be involved in retrograde transport of early and late endosomes to the late Golgi. The protein is Vacuolar protein sorting-associated protein 52 B (P2) of Arabidopsis thaliana (Mouse-ear cress).